The following is a 434-amino-acid chain: Putative polysaccharide biosynthesis protein with aminopeptidase-like domain (434 aa).

Aminopeptidase-like stretches follow at residues 1-55 (MEEI…IHEV) and 57-355 (SGTK…IENN). The tract at residues 56 to 164 (KSGTKVFDWT…VVIDSSLEDG (109 aa)) is insert. Zn(2+) is bound by residues His-189, Asp-195, and His-324. A permutated winged helix-turn-helix region spans residues 356 to 434 (RTYLNLNPKC…LYRVELLKLV (79 aa)).

This sequence belongs to the UPF0770 family. Homotrimer. It depends on Zn(2+) as a cofactor.

In terms of biological role, the genomic context suggests a role in the biosynthesis of modified polysaccharides; this association with genes involved in carbohydrate metabolism is observed in several phylogenetically distinct taxa. Is not expected to have peptidase activity despite low similarity to aminopeptidases. This is Putative polysaccharide biosynthesis protein with aminopeptidase-like domain from Clostridium acetobutylicum (strain ATCC 824 / DSM 792 / JCM 1419 / IAM 19013 / LMG 5710 / NBRC 13948 / NRRL B-527 / VKM B-1787 / 2291 / W).